A 607-amino-acid polypeptide reads, in one-letter code: Glutamine--fructose-6-phosphate aminotransferase [isomerizing] (607 aa).

Cys2 (nucleophile; for GATase activity) is an active-site residue. Residues 2-218 form the Glutamine amidotransferase type-2 domain; that stretch reads CGIIGYSGSK…DGDVVLVTKD (217 aa). 2 SIS domains span residues 280 to 424 and 457 to 597; these read FDEQ…KLGK and IAKK…VDKP. The active-site For Fru-6P isomerization activity is the Lys602.

Homodimer.

It localises to the cytoplasm. The catalysed reaction is D-fructose 6-phosphate + L-glutamine = D-glucosamine 6-phosphate + L-glutamate. In terms of biological role, catalyzes the first step in hexosamine metabolism, converting fructose-6P into glucosamine-6P using glutamine as a nitrogen source. The protein is Glutamine--fructose-6-phosphate aminotransferase [isomerizing] of Fusobacterium nucleatum subsp. nucleatum (strain ATCC 25586 / DSM 15643 / BCRC 10681 / CIP 101130 / JCM 8532 / KCTC 2640 / LMG 13131 / VPI 4355).